Consider the following 184-residue polypeptide: Putative manganese efflux pump MntP (184 aa).

6 helical membrane-spanning segments follow: residues 5-25, 38-58, 67-87, 107-127, 133-153, and 164-184; these read LISIIIIAIALAMDAFSVSLT, ILYYGLFFGFFQFIMPVIGYI, VSTVAPWIAFFLLLAIGLNMI, LTLLAVATSIDAFAVGITFAL, LLPCTIIGIVAFIFSISGIFI, and KFEILGGAVLILIGIKILLGY.

The protein belongs to the MntP (TC 9.B.29) family.

The protein localises to the cell membrane. Functionally, probably functions as a manganese efflux pump. The sequence is that of Putative manganese efflux pump MntP from Methanobrevibacter smithii (strain ATCC 35061 / DSM 861 / OCM 144 / PS).